A 396-amino-acid polypeptide reads, in one-letter code: tRNA-specific 2-thiouridylase MnmA (396 aa).

ATP-binding positions include 42–49 (GMSGGVDS) and methionine 68. The interaction with target base in tRNA stretch occupies residues 128-130 (NPD). The active-site Nucleophile is cysteine 133. Cysteines 133 and 230 form a disulfide. Residue glycine 158 coordinates ATP. Residues 180–182 (KDQ) form an interaction with tRNA region. Cysteine 230 (cysteine persulfide intermediate) is an active-site residue. Positions 342–343 (RY) are interaction with tRNA.

Belongs to the MnmA/TRMU family.

Its subcellular location is the cytoplasm. The enzyme catalyses S-sulfanyl-L-cysteinyl-[protein] + uridine(34) in tRNA + AH2 + ATP = 2-thiouridine(34) in tRNA + L-cysteinyl-[protein] + A + AMP + diphosphate + H(+). Functionally, catalyzes the 2-thiolation of uridine at the wobble position (U34) of tRNA, leading to the formation of s(2)U34. This is tRNA-specific 2-thiouridylase MnmA from Pseudoalteromonas atlantica (strain T6c / ATCC BAA-1087).